The sequence spans 702 residues: Lipase maturation factor 2 (702 aa).

10 helical membrane-spanning segments follow: residues 10–30, 75–95, 102–122, 123–143, 164–184, 226–246, 259–279, 316–336, 363–383, and 396–416; these read LFLQ…YTQI, AQGL…ALLL, FIYL…QVFL, YFQW…VAPL, DLPF…SGVV, LSVV…FAPI, LLQI…LTLV, LMLE…YFGL, VTLP…LIAL, and FFAG…FLIS. Residue N488 is glycosylated (N-linked (GlcNAc...) asparagine). The helical transmembrane segment at 628–648 threads the bilayer; it reads QLSPLEPSILLWGLLGAVVAI. A disordered region spans residues 660 to 702; it reads LQSSKQTREEKRKQAPKKDSRAVSEQTAPNSNSNGSWAPRRKK. Over residues 665-681 the composition is skewed to basic and acidic residues; it reads QTREEKRKQAPKKDSRA. Over residues 682–695 the composition is skewed to polar residues; sequence VSEQTAPNSNSNGS.

This sequence belongs to the lipase maturation factor family.

The protein resides in the endoplasmic reticulum membrane. In terms of biological role, involved in the maturation of specific proteins in the endoplasmic reticulum. May be required for maturation and transport of active lipoprotein lipase (LPL) through the secretory pathway. The sequence is that of Lipase maturation factor 2 (Lmf2) from Rattus norvegicus (Rat).